The following is a 165-amino-acid chain: Nucleotide-binding protein Tfu_2672 (165 aa).

It belongs to the YajQ family.

Functionally, nucleotide-binding protein. This is Nucleotide-binding protein Tfu_2672 from Thermobifida fusca (strain YX).